A 303-amino-acid polypeptide reads, in one-letter code: Methionyl-tRNA formyltransferase (303 aa).

108 to 111 (SDLP) lines the (6S)-5,6,7,8-tetrahydrofolate pocket.

Belongs to the Fmt family.

It carries out the reaction L-methionyl-tRNA(fMet) + (6R)-10-formyltetrahydrofolate = N-formyl-L-methionyl-tRNA(fMet) + (6S)-5,6,7,8-tetrahydrofolate + H(+). In terms of biological role, attaches a formyl group to the free amino group of methionyl-tRNA(fMet). The formyl group appears to play a dual role in the initiator identity of N-formylmethionyl-tRNA by promoting its recognition by IF2 and preventing the misappropriation of this tRNA by the elongation apparatus. This Rickettsia felis (strain ATCC VR-1525 / URRWXCal2) (Rickettsia azadi) protein is Methionyl-tRNA formyltransferase.